The following is a 97-amino-acid chain: HssA/B-like protein 27 (97 aa).

This sequence belongs to the hssA/B family.

The chain is HssA/B-like protein 27 (hssl27) from Dictyostelium discoideum (Social amoeba).